The chain runs to 188 residues: GMP synthase [glutamine-hydrolyzing] subunit A (188 aa).

Residues 3–188 (KVLVVAFGGQ…FQNFVELCKR (186 aa)) form the Glutamine amidotransferase type-1 domain. The active-site Nucleophile is Cys79. Catalysis depends on residues His166 and Glu168.

In terms of assembly, heterodimer composed of a glutamine amidotransferase subunit (A) and a GMP-binding subunit (B).

The enzyme catalyses XMP + L-glutamine + ATP + H2O = GMP + L-glutamate + AMP + diphosphate + 2 H(+). Its pathway is purine metabolism; GMP biosynthesis; GMP from XMP (L-Gln route): step 1/1. Functionally, catalyzes the synthesis of GMP from XMP. The protein is GMP synthase [glutamine-hydrolyzing] subunit A of Ignicoccus hospitalis (strain KIN4/I / DSM 18386 / JCM 14125).